Here is a 159-residue protein sequence, read N- to C-terminus: Large ribosomal subunit protein uL10 (159 aa).

Belongs to the universal ribosomal protein uL10 family. In terms of assembly, part of the ribosomal stalk of the 50S ribosomal subunit. The N-terminus interacts with L11 and the large rRNA to form the base of the stalk. The C-terminus forms an elongated spine to which L12 dimers bind in a sequential fashion forming a multimeric L10(L12)X complex.

Its function is as follows. Forms part of the ribosomal stalk, playing a central role in the interaction of the ribosome with GTP-bound translation factors. The chain is Large ribosomal subunit protein uL10 (rplJ) from Campylobacter jejuni subsp. jejuni serotype O:2 (strain ATCC 700819 / NCTC 11168).